We begin with the raw amino-acid sequence, 601 residues long: Replication protein A 70 kDa DNA-binding subunit (601 aa).

The interval 107 to 172 (MPGKIGDPTP…NTPGGSSKVV (66 aa)) is disordered. A compositionally biased stretch (low complexity) spans 124–135 (APSTAPAPTARP). The segment covering 137–153 (QPQNGSDGSTYRPSAQS) has biased composition (polar residues). Positions 184 to 268 (WTIRARVTNK…LKNDYEMTLN (85 aa)) form a DNA-binding region, OB. Ser-370 bears the Phosphoserine mark. The segment at 466-488 (CPSKDCNKKVVDQQNGMFRCEKC) adopts a C4-type zinc-finger fold.

The protein belongs to the replication factor A protein 1 family. In terms of assembly, component of the heterotrimeric canonical replication protein A complex (RPA).

Its subcellular location is the nucleus. The protein localises to the PML body. Its function is as follows. As part of the heterotrimeric replication protein A complex (RPA/RP-A), binds and stabilizes single-stranded DNA intermediates, that form during DNA replication or upon DNA stress. It prevents their reannealing and in parallel, recruits and activates different proteins and complexes involved in DNA metabolism. Thereby, it plays an essential role both in DNA replication and the cellular response to DNA damage. This chain is Replication protein A 70 kDa DNA-binding subunit (rpa1), found in Danio rerio (Zebrafish).